Here is a 284-residue protein sequence, read N- to C-terminus: 2-dehydro-3-deoxyphosphooctonate aldolase (284 aa).

Belongs to the KdsA family.

The protein resides in the cytoplasm. The enzyme catalyses D-arabinose 5-phosphate + phosphoenolpyruvate + H2O = 3-deoxy-alpha-D-manno-2-octulosonate-8-phosphate + phosphate. It participates in carbohydrate biosynthesis; 3-deoxy-D-manno-octulosonate biosynthesis; 3-deoxy-D-manno-octulosonate from D-ribulose 5-phosphate: step 2/3. The protein operates within bacterial outer membrane biogenesis; lipopolysaccharide biosynthesis. This is 2-dehydro-3-deoxyphosphooctonate aldolase from Pectobacterium atrosepticum (strain SCRI 1043 / ATCC BAA-672) (Erwinia carotovora subsp. atroseptica).